A 154-amino-acid polypeptide reads, in one-letter code: Transcription antitermination protein NusB (154 aa).

Belongs to the NusB family.

Its function is as follows. Involved in transcription antitermination. Required for transcription of ribosomal RNA (rRNA) genes. Binds specifically to the boxA antiterminator sequence of the ribosomal RNA (rrn) operons. This Desulfosudis oleivorans (strain DSM 6200 / JCM 39069 / Hxd3) (Desulfococcus oleovorans) protein is Transcription antitermination protein NusB.